The following is a 351-amino-acid chain: 3-dehydroquinate synthase (351 aa).

NAD(+) is bound by residues 60 to 65 (DGEEYK), 94 to 98 (GVISD), 118 to 119 (TT), lysine 131, lysine 140, and 158 to 161 (FLKT). Positions 173, 239, and 256 each coordinate Zn(2+).

It belongs to the sugar phosphate cyclases superfamily. Dehydroquinate synthase family. The cofactor is Co(2+). Zn(2+) serves as cofactor. It depends on NAD(+) as a cofactor.

It localises to the cytoplasm. It catalyses the reaction 7-phospho-2-dehydro-3-deoxy-D-arabino-heptonate = 3-dehydroquinate + phosphate. The protein operates within metabolic intermediate biosynthesis; chorismate biosynthesis; chorismate from D-erythrose 4-phosphate and phosphoenolpyruvate: step 2/7. In terms of biological role, catalyzes the conversion of 3-deoxy-D-arabino-heptulosonate 7-phosphate (DAHP) to dehydroquinate (DHQ). The chain is 3-dehydroquinate synthase from Campylobacter jejuni subsp. jejuni serotype O:23/36 (strain 81-176).